Reading from the N-terminus, the 471-residue chain is Siroheme synthase (471 aa).

The interval M1–L203 is precorrin-2 dehydrogenase /sirohydrochlorin ferrochelatase. Residues E22–V23 and K43–N44 contribute to the NAD(+) site. At S128 the chain carries Phosphoserine. Residues G215–A471 form a uroporphyrinogen-III C-methyltransferase region. P224 is a binding site for S-adenosyl-L-methionine. The active-site Proton acceptor is D247. The active-site Proton donor is the K269. Residues G300–D302, I305, T330–A331, M382, and A411 contribute to the S-adenosyl-L-methionine site.

It in the N-terminal section; belongs to the precorrin-2 dehydrogenase / sirohydrochlorin ferrochelatase family. The protein in the C-terminal section; belongs to the precorrin methyltransferase family.

It catalyses the reaction uroporphyrinogen III + 2 S-adenosyl-L-methionine = precorrin-2 + 2 S-adenosyl-L-homocysteine + H(+). The enzyme catalyses precorrin-2 + NAD(+) = sirohydrochlorin + NADH + 2 H(+). It carries out the reaction siroheme + 2 H(+) = sirohydrochlorin + Fe(2+). The protein operates within cofactor biosynthesis; adenosylcobalamin biosynthesis; precorrin-2 from uroporphyrinogen III: step 1/1. It functions in the pathway cofactor biosynthesis; adenosylcobalamin biosynthesis; sirohydrochlorin from precorrin-2: step 1/1. Its pathway is porphyrin-containing compound metabolism; siroheme biosynthesis; precorrin-2 from uroporphyrinogen III: step 1/1. It participates in porphyrin-containing compound metabolism; siroheme biosynthesis; siroheme from sirohydrochlorin: step 1/1. The protein operates within porphyrin-containing compound metabolism; siroheme biosynthesis; sirohydrochlorin from precorrin-2: step 1/1. In terms of biological role, multifunctional enzyme that catalyzes the SAM-dependent methylations of uroporphyrinogen III at position C-2 and C-7 to form precorrin-2 via precorrin-1. Then it catalyzes the NAD-dependent ring dehydrogenation of precorrin-2 to yield sirohydrochlorin. Finally, it catalyzes the ferrochelation of sirohydrochlorin to yield siroheme. This chain is Siroheme synthase, found in Zymomonas mobilis subsp. mobilis (strain ATCC 31821 / ZM4 / CP4).